Reading from the N-terminus, the 314-residue chain is tRNA dimethylallyltransferase (314 aa).

ATP is bound at residue 36–43; the sequence is GPTASGKT. 38 to 43 is a binding site for substrate; sequence TASGKT. The segment at 61–64 is interaction with substrate tRNA; the sequence is DSVQ.

The protein belongs to the IPP transferase family. Monomer. The cofactor is Mg(2+).

The catalysed reaction is adenosine(37) in tRNA + dimethylallyl diphosphate = N(6)-dimethylallyladenosine(37) in tRNA + diphosphate. In terms of biological role, catalyzes the transfer of a dimethylallyl group onto the adenine at position 37 in tRNAs that read codons beginning with uridine, leading to the formation of N6-(dimethylallyl)adenosine (i(6)A). This Sorangium cellulosum (strain So ce56) (Polyangium cellulosum (strain So ce56)) protein is tRNA dimethylallyltransferase.